Here is a 394-residue protein sequence, read N- to C-terminus: Ribulose bisphosphate carboxylase large chain (394 aa).

K5 bears the N6,N6,N6-trimethyllysine mark. The substrate site is built by N114 and T164. Residue K166 is the Proton acceptor of the active site. K168 contacts substrate. 3 residues coordinate Mg(2+): K192, D194, and E195. K192 carries the post-translational modification N6-carboxylysine. H285 functions as the Proton acceptor in the catalytic mechanism. The substrate site is built by R286, H318, and S370.

This sequence belongs to the RuBisCO large chain family. Type I subfamily. As to quaternary structure, heterohexadecamer of 8 large chains and 8 small chains. It depends on Mg(2+) as a cofactor.

It is found in the plastid. It localises to the chloroplast. The enzyme catalyses 2 (2R)-3-phosphoglycerate + 2 H(+) = D-ribulose 1,5-bisphosphate + CO2 + H2O. It carries out the reaction D-ribulose 1,5-bisphosphate + O2 = 2-phosphoglycolate + (2R)-3-phosphoglycerate + 2 H(+). Its function is as follows. RuBisCO catalyzes two reactions: the carboxylation of D-ribulose 1,5-bisphosphate, the primary event in carbon dioxide fixation, as well as the oxidative fragmentation of the pentose substrate in the photorespiration process. Both reactions occur simultaneously and in competition at the same active site. This is Ribulose bisphosphate carboxylase large chain (rbcL) from Nymphaea odorata (White water lily).